A 540-amino-acid chain; its full sequence is MLRMDTVHRDKDQVVILKKTNYLPYLVNLFIPKLFYPEKIVVARLYLNVNKHDKHAAENFKGTETPCFDVPPSLFSDKVPMDKIVFLPTVMLPMGFEAGGVFGPGVLTRRSYPIDLKAAGHKGQTPPLFIGLLMDIQAPTKVESLLKEVGESQPAQDILMNWVRASNNLINGEQPKEQELRDEFSLSMVFNLPTPPSPPSPYPYGRIPLQFNIYTPDLSNVLLLMSHQRDLTVAILSTINNPHVPSVAFAAMGDEEECPKFELPLSAFPTFEGVNRPIFLPKRFMPKGFEAGCVLKPGALSDLWFMDHIGRFGPTQPQHNGSITPPLFVGKICREEPTVDMIRKIQLEIEKKASEDATLPAVKPKIDISITKGFMVMETAAEDPKPPKGAYSVQSYEEAFDDGCVVKVAKRVATEATDTRGRDEIRTSCDQSQEKDEGSAEADKKHLSCFHVDSDIDNIAMAMARMGVADMSLPAEGEAMPGIDGDRALIQLSHVMEDRNQIRTHTDQLMQDHIFRMNSNRMLALRQPFTCIGCGAQENK.

The tract at residues 416–443 is disordered; sequence ATDTRGRDEIRTSCDQSQEKDEGSAEAD. The segment covering 417–443 has biased composition (basic and acidic residues); the sequence is TDTRGRDEIRTSCDQSQEKDEGSAEAD.

It belongs to the DM7 family.

The protein is DM7 family protein GD24576 of Drosophila simulans (Fruit fly).